The sequence spans 61 residues: Large ribosomal subunit protein bL32 (61 aa).

The span at 1–16 shows a compositional bias: basic residues; the sequence is MAVPKRKTSPSKRGMR. A disordered region spans residues 1–35; the sequence is MAVPKRKTSPSKRGMRRSADGLKSATYVEDKNSGE.

The protein belongs to the bacterial ribosomal protein bL32 family.

This is Large ribosomal subunit protein bL32 from Agrobacterium fabrum (strain C58 / ATCC 33970) (Agrobacterium tumefaciens (strain C58)).